Here is a 135-residue protein sequence, read N- to C-terminus: Flagellar assembly factor FliW 2 (135 aa).

The protein belongs to the FliW family. As to quaternary structure, interacts with translational regulator CsrA and flagellin(s).

It is found in the cytoplasm. In terms of biological role, acts as an anti-CsrA protein, binds CsrA and prevents it from repressing translation of its target genes, one of which is flagellin. Binds to flagellin and participates in the assembly of the flagellum. The chain is Flagellar assembly factor FliW 2 from Helicobacter acinonychis (strain Sheeba).